A 340-amino-acid chain; its full sequence is Photosystem II protein D1 (340 aa).

The next 3 membrane-spanning stretches (helical) occupy residues 25–42 (YIGWFGLLVFPLLSLATV), 114–129 (HFFLGVCGWMGREWEF), and 138–152 (WIFVAFSAPIAAAAA). Chlorophyll a is bound at residue His-114. Trp-122 serves as a coordination point for pheophytin a. 2 residues coordinate [CaMn4O5] cluster: Asp-166 and Glu-185. The helical transmembrane segment at 193–214 (FHILGVAGVFGGSLFSAMHGSL) threads the bilayer. Residue His-194 participates in chlorophyll a binding. Residues His-211 and 260–261 (SF) contribute to the a quinone site. A Fe cation-binding site is contributed by His-211. His-268 serves as a coordination point for Fe cation. Residues 270–284 (FLAAWPVIGIWITSL) form a helical membrane-spanning segment. Residues His-328, Glu-329, Asp-338, and Ala-340 each coordinate [CaMn4O5] cluster.

The protein belongs to the reaction center PufL/M/PsbA/D family. As to quaternary structure, PSII is composed of 1 copy each of membrane proteins PsbA, PsbB, PsbC, PsbD, PsbE, PsbF, PsbH, PsbI, PsbJ, PsbK, PsbL, PsbM, PsbT, PsbX, PsbY, PsbZ, Psb30/Ycf12, at least 3 peripheral proteins of the oxygen-evolving complex and a large number of cofactors. It forms dimeric complexes. The cofactor is The D1/D2 heterodimer binds P680, chlorophylls that are the primary electron donor of PSII, and subsequent electron acceptors. It shares a non-heme iron and each subunit binds pheophytin, quinone, additional chlorophylls, carotenoids and lipids. D1 provides most of the ligands for the Mn4-Ca-O5 cluster of the oxygen-evolving complex (OEC). There is also a Cl(-1) ion associated with D1 and D2, which is required for oxygen evolution. The PSII complex binds additional chlorophylls, carotenoids and specific lipids.. Post-translationally, tyr-157 forms a radical intermediate that is referred to as redox-active TyrZ, YZ or Y-Z.

It is found in the plastid. It localises to the chloroplast thylakoid membrane. The enzyme catalyses 2 a plastoquinone + 4 hnu + 2 H2O = 2 a plastoquinol + O2. In terms of biological role, photosystem II (PSII) is a light-driven water:plastoquinone oxidoreductase that uses light energy to abstract electrons from H(2)O, generating O(2) and a proton gradient subsequently used for ATP formation. It consists of a core antenna complex that captures photons, and an electron transfer chain that converts photonic excitation into a charge separation. The D1/D2 (PsbA/PsbD) reaction center heterodimer binds P680, the primary electron donor of PSII as well as several subsequent electron acceptors. This chain is Photosystem II protein D1, found in Amphidinium carterae (Dinoflagellate).